The following is a 584-amino-acid chain: ATP-dependent lipid A-core flippase 2 (584 aa).

The next 6 membrane-spanning stretches (helical) occupy residues 32-52 (IFIA…MIYF), 68-88 (TLQL…IASF), 146-166 (SAVV…SMMV), 167-187 (YNSW…ALII), 254-274 (AISN…VLLL), and 280-300 (VLNQ…GSLL). The ABC transmembrane type-1 domain occupies 33–315 (FIALAGLCLF…LSNINQQLQK (283 aa)). One can recognise an ABC transporter domain in the interval 347 to 583 (IRFNNFSFTY…AGYYQSLYQS (237 aa)). 381-388 (GESGSGKS) contacts ATP.

It belongs to the ABC transporter superfamily. Lipid exporter (TC 3.A.1.106) family. Homodimer.

It is found in the cell inner membrane. It catalyses the reaction ATP + H2O + lipid A-core oligosaccharideSide 1 = ADP + phosphate + lipid A-core oligosaccharideSide 2.. Involved in lipopolysaccharide (LPS) biosynthesis. Translocates lipid A-core from the inner to the outer leaflet of the inner membrane. Transmembrane domains (TMD) form a pore in the inner membrane and the ATP-binding domain (NBD) is responsible for energy generation. The polypeptide is ATP-dependent lipid A-core flippase 2 (Colwellia psychrerythraea (strain 34H / ATCC BAA-681) (Vibrio psychroerythus)).